The primary structure comprises 348 residues: Mycothiol acetyltransferase (348 aa).

2 N-acetyltransferase domains span residues 12–156 (TSMR…VDVT) and 169–330 (VAVR…HGTP). Residue Glu44 participates in 1D-myo-inositol 2-(L-cysteinylamino)-2-deoxy-alpha-D-glucopyranoside binding. 91-93 (LVV) lines the acetyl-CoA pocket. 3 residues coordinate 1D-myo-inositol 2-(L-cysteinylamino)-2-deoxy-alpha-D-glucopyranoside: Glu196, Lys235, and Glu253. Acetyl-CoA-binding positions include 257 to 259 (VGV) and 264 to 270 (QGLGMGR). Tyr291 contributes to the 1D-myo-inositol 2-(L-cysteinylamino)-2-deoxy-alpha-D-glucopyranoside binding site. 296–301 (NTVAVH) is an acetyl-CoA binding site. Residues 320–348 (PPAGSPAHGTPLVRVTDTPSSPGDATMGS) are disordered. The span at 336 to 348 (DTPSSPGDATMGS) shows a compositional bias: polar residues.

The protein belongs to the acetyltransferase family. MshD subfamily. Monomer.

It carries out the reaction 1D-myo-inositol 2-(L-cysteinylamino)-2-deoxy-alpha-D-glucopyranoside + acetyl-CoA = mycothiol + CoA + H(+). Functionally, catalyzes the transfer of acetyl from acetyl-CoA to desacetylmycothiol (Cys-GlcN-Ins) to form mycothiol. In Cellulomonas flavigena (strain ATCC 482 / DSM 20109 / BCRC 11376 / JCM 18109 / NBRC 3775 / NCIMB 8073 / NRS 134), this protein is Mycothiol acetyltransferase.